Consider the following 36-residue polypeptide: Photosystem I reaction center subunit VIII (36 aa).

A helical membrane pass occupies residues 9-29; that stretch reads ILVPLVGLIFPAFSMALFFLY.

It belongs to the PsaI family.

The protein resides in the plastid. Its subcellular location is the chloroplast thylakoid membrane. In terms of biological role, may help in the organization of the PsaL subunit. The protein is Photosystem I reaction center subunit VIII of Thalassiosira pseudonana (Marine diatom).